The chain runs to 266 residues: GRIP and coiled-coil domain-containing protein C365.11 (266 aa).

The span at 1–13 (METTVSAKNSLEN) shows a compositional bias: polar residues. The segment at 1 to 88 (METTVSAKNS…LDEKVKELEN (88 aa)) is disordered. At S10 the chain carries Phosphoserine. Basic residues predominate over residues 36–49 (ASKKKRKNRKKKKN). A compositionally biased stretch (basic and acidic residues) spans 63–88 (EEQRSGSIDSKDKEKPLDEKVKELEN). The stretch at 73–188 (KDKEKPLDEK…ESVKSHESEL (116 aa)) forms a coiled coil. Phosphoserine is present on residues S202 and S204. In terms of domain architecture, GRIP spans 216–264 (ISKELINKEYARNVLLQFLENHEHRDKILPILSTALDLEEVHQHLILKN).

Its subcellular location is the cytoplasm. The polypeptide is GRIP and coiled-coil domain-containing protein C365.11 (Schizosaccharomyces pombe (strain 972 / ATCC 24843) (Fission yeast)).